Here is a 201-residue protein sequence, read N- to C-terminus: MPIGTPSVPYRLPGSQYERWVDIYTRLGVERILFLGQEVNDGIANSLVAQMLYLDSDDNTKPIYLYINSPGGSVTAGLAIYDTIKYVKSDVVTICVGLAASMGAFLLGAGTKGKRVALPHSRIMIHQPLGGTSQRQASDIEIEAREILRIKDMLNHSMSDMTGQSFEKIEKDTDRDYFLSAEEAKNYGLIDRVISHPSEAS.

Serine 101 (nucleophile) is an active-site residue. Residue histidine 126 is part of the active site.

The protein belongs to the peptidase S14 family. As to quaternary structure, fourteen ClpP subunits assemble into 2 heptameric rings which stack back to back to give a disk-like structure with a central cavity, resembling the structure of eukaryotic proteasomes.

The protein localises to the cytoplasm. It carries out the reaction Hydrolysis of proteins to small peptides in the presence of ATP and magnesium. alpha-casein is the usual test substrate. In the absence of ATP, only oligopeptides shorter than five residues are hydrolyzed (such as succinyl-Leu-Tyr-|-NHMec, and Leu-Tyr-Leu-|-Tyr-Trp, in which cleavage of the -Tyr-|-Leu- and -Tyr-|-Trp bonds also occurs).. Cleaves peptides in various proteins in a process that requires ATP hydrolysis. Has a chymotrypsin-like activity. Plays a major role in the degradation of misfolded proteins. The chain is ATP-dependent Clp protease proteolytic subunit 2 from Prochlorococcus marinus subsp. pastoris (strain CCMP1986 / NIES-2087 / MED4).